We begin with the raw amino-acid sequence, 2554 residues long: Highly reducing polyketide synthase PKS6 (2554 aa).

The segment at 1 to 48 is disordered; it reads MGSLSAVPATNGNHAALNGSASTNGQHVNGSTHVNGNHSLNGSAQVNG. Residues 8–48 show a composition bias toward polar residues; it reads PATNGNHAALNGSASTNGQHVNGSTHVNGNHSLNGSAQVNG. The Ketosynthase family 3 (KS3) domain maps to 56–481; sequence LEPIAVVGMS…GTNAHVVVDA (426 aa). Catalysis depends on for beta-ketoacyl synthase activity residues C230, H367, and H407. The interval 595–913 is malonyl-CoA:ACP transacylase (MAT) domain; sequence VFSGQGAQYP…HYTGSLKRGE (319 aa). Residues 981-1119 are N-terminal hotdog fold; it reads HELLGTLVHD…GLVQVILKSE (139 aa). The interval 981–1281 is dehydratase (DH) domain; it reads HELLGTLVHD…QAWGVVATKL (301 aa). Positions 981 to 1287 constitute a PKS/mFAS DH domain; sequence HELLGTLVHD…ATKLPDVSIG (307 aa). The Proton acceptor; for dehydratase activity role is filled by H1013. Residues 1137–1287 form a C-terminal hotdog fold region; sequence AQHIPANQFY…ATKLPDVSIG (151 aa). The active-site Proton donor; for dehydratase activity is the D1200. The segment at 1451–1556 is methyltransferase (CMet) domain; that stretch reads VEVGAGTGSA…KTMLRPGGKL (106 aa). The interval 1840–2153 is enoyl reductase (ER) domain; it reads GVLDTIRWVD…AGKHTGKVIL (314 aa). The ketoreductase (KR) domain stretch occupies residues 2177–2353; that stretch reads ATYLVVGGLG…TAYAVNIGAI (177 aa). Residues 2457–2534 enclose the Carrier domain; sequence EAQDIICDAI…ELAEIVTKGS (78 aa). S2494 carries the O-(pantetheine 4'-phosphoryl)serine modification.

Its pathway is secondary metabolite biosynthesis. In terms of biological role, highly reducing polyketide synthase; part of the gene cluster that mediates the biosynthesis of the lipopeptide fusaristatin A. Fusaristatin A consists of a polyketide chain linked to three amino acid residues glutamine (Gln), dehydroalanine (dehydro-Ala), and beta-aminoisobutyric acid. The biosynthesis starts with formation of a linear polyketide chain by the highly reducing polyketide synthase PKS6. The gene cluster does not contain an acyl-CoA ligase or an acyl-transferase, and it is therefore predicted that the polyketide is transferred directly to the nonribosomal peptide synthetase NRPS7. Modules 1-3 from NRPS7 incorporate dehydro-Ala, Gln, and beta-aminoisobutyric acid in the compound, which is released by cyclization. The beta-aminoisobutyric acid units are most likely not freely available to the NRPS, but can be synthesized from thymine, which requires a dehydrogenase, a monooxygenase, and an aminotransferase. The fusaristatin A cluster contains a cytochrome P450 monooxygenase (FGSG_08207) and an aminotransferase (FGSG_17085), which theoretically can perform two of the enzymatic steps. The enzymes may however also be involved in biosynthesis of dehydroalanine or modification of the polyketide. The dehydro-Ala residue can be a result of cyclization, where serine is dehydrated. The last gene of the cluster encodes a protein with an A/B barrel domain found in variable enzymes, which hampers functional prediction. The sequence is that of Highly reducing polyketide synthase PKS6 from Gibberella zeae (strain ATCC MYA-4620 / CBS 123657 / FGSC 9075 / NRRL 31084 / PH-1) (Wheat head blight fungus).